Here is a 106-residue protein sequence, read N- to C-terminus: Large ribosomal subunit protein bL21 (106 aa).

The protein belongs to the bacterial ribosomal protein bL21 family. Part of the 50S ribosomal subunit. Contacts protein L20.

In terms of biological role, this protein binds to 23S rRNA in the presence of protein L20. In Syntrophobacter fumaroxidans (strain DSM 10017 / MPOB), this protein is Large ribosomal subunit protein bL21.